We begin with the raw amino-acid sequence, 376 residues long: D-alanine--D-alanine ligase (376 aa).

Residues 153–366 (KLLLAGQGLP…YPELVHRLIQ (214 aa)) enclose the ATP-grasp domain. Residue 185–240 (VEALGYPVFVKPARAGSSIGITRVTSREGLAAAVAEAVSHDPKVVVEAALVGREIE) participates in ATP binding. Mg(2+)-binding residues include D317, E333, and N335.

Belongs to the D-alanine--D-alanine ligase family. Mg(2+) is required as a cofactor. The cofactor is Mn(2+).

Its subcellular location is the cytoplasm. It carries out the reaction 2 D-alanine + ATP = D-alanyl-D-alanine + ADP + phosphate + H(+). It participates in cell wall biogenesis; peptidoglycan biosynthesis. Its function is as follows. Cell wall formation. In Kineococcus radiotolerans (strain ATCC BAA-149 / DSM 14245 / SRS30216), this protein is D-alanine--D-alanine ligase.